The primary structure comprises 699 residues: SPS-sensor serine protease component SSY5 (699 aa).

Disordered stretches follow at residues 1–113 (MVRF…LQGF) and 129–158 (VKEE…GNAR). The propeptide occupies 1-381 (MVRFFGLNKK…YCVKDYIKKA (381 aa)). Over residues 24–38 (NEQNAAETSSSNVSG) the composition is skewed to polar residues. Over residues 39–51 (NEERIDPNSHDAN) the composition is skewed to basic and acidic residues. Positions 52 to 78 (PENANNDDASTTFGSSIQSSSIFSRGR) are enriched in low complexity. Over residues 83–93 (TGASSSMATSE) the composition is skewed to polar residues. Composition is skewed to low complexity over residues 97–109 (HSSG…NSKN) and 144–154 (SSSTSSTLATS). Positions 459–699 (FAITCAHVVL…QWDIDPQLDG (241 aa)) are serine protease. Catalysis depends on charge relay system residues H465, D545, and S640.

The protein belongs to the peptidase S64 family. Component of the plasma membrane SPS (SSY1-PTR3-SSY5) amino acid sensor complex. The propeptide is autoproteolytically cleaved from the catalytic domain but remains associated, forming an inactive protease complex. This processing occurs even in the absence of signaling.

It is found in the cell membrane. Its function is as follows. Protease component of the SPS-sensor system, which regulates the expression of several amino acid-metabolizing enzymes and amino acid- and peptide-permeases in response to extracellular amino acid levels by controlling the activity of two transcription factors, STP1 and STP2. Catalyzes the activation of these transcription factors, which are synthesized as latent cytoplasmic precursors, by proteolytic removal of an N-terminal inhibitory domain containing cytoplasmic retention motifs. SSY5 binds as an inactive protease complex to STP1. In response to extracellular amino acids and dependent on the other SPS-sensor components, the inhibitory propeptide is induced to dissociate, and thereby enables the catalytic domain to process STP1. The chain is SPS-sensor serine protease component SSY5 (SSY5) from Saccharomyces cerevisiae (strain YJM789) (Baker's yeast).